The chain runs to 201 residues: Probable nicotinate-nucleotide adenylyltransferase (201 aa).

It belongs to the NadD family.

It carries out the reaction nicotinate beta-D-ribonucleotide + ATP + H(+) = deamido-NAD(+) + diphosphate. It participates in cofactor biosynthesis; NAD(+) biosynthesis; deamido-NAD(+) from nicotinate D-ribonucleotide: step 1/1. In terms of biological role, catalyzes the reversible adenylation of nicotinate mononucleotide (NaMN) to nicotinic acid adenine dinucleotide (NaAD). The polypeptide is Probable nicotinate-nucleotide adenylyltransferase (Clostridium botulinum (strain Langeland / NCTC 10281 / Type F)).